The chain runs to 93 residues: Antitoxin EndoAI (93 aa).

This sequence belongs to the MazE/EndoAI family. As to quaternary structure, homodimer, forms a heterohexamer composed of alternating toxin and antitoxin homodimers which inhibits the toxin's endoribonuclease activity. Antitoxin prevents RNA binding to the endoribonuclease.

Functionally, antitoxin component of a type II toxin-antitoxin (TA) system. Antitoxin that directly inhibits activity of EndoA in vitro. Upon expression in E.coli counteracts inhibitory effect of endoribonuclease EndoA. The EndoA-EndoAI complex does not seem to bind its own promoter. The chain is Antitoxin EndoAI from Bacillus subtilis (strain 168).